A 745-amino-acid chain; its full sequence is Interleukin-17 receptor D (745 aa).

The N-terminal stretch at 1 to 26 (MAGSRRLAHFFMASCLFLCYTASVNG) is a signal peptide. Over 27–298 (GKRGNSDKCS…VHSPWAGPIR (272 aa)) the chain is Extracellular. N-linked (GlcNAc...) asparagine glycosylation is found at asparagine 61, asparagine 79, asparagine 136, asparagine 170, asparagine 205, and asparagine 276. A helical transmembrane segment spans residues 299 to 319 (AMAITVPLVIMSAFATLFTVM). Residues 320-745 (CRKKQQENIY…SEGLIAAAST (426 aa)) lie on the Cytoplasmic side of the membrane. Residues 354 to 518 (RPKIFICYSS…LMDQLPQLFA (165 aa)) form the SEFIR domain. Disordered stretches follow at residues 432–454 (RHRK…DSSS) and 631–713 (REDL…PPAV). Over residues 439-448 (TSKEKNREPS) the composition is skewed to basic and acidic residues. A compositionally biased stretch (low complexity) spans 693–705 (SSLADSVSSSSGL).

In terms of assembly, interacts with fgfr1 and fgfr2.

It is found in the membrane. In terms of biological role, feedback inhibitor of fibroblast growth factor mediated Ras-MAPK signaling and ERK activation. May inhibit FGF-induced FGFR1 tyrosine phosphorylation. The polypeptide is Interleukin-17 receptor D (il17rd) (Danio rerio (Zebrafish)).